The sequence spans 588 residues: Protein gamma response 1 (588 aa).

Coiled-coil stretches lie at residues 64 to 104 (AACD…LGKT) and 164 to 281 (SEVK…KTVV). 3 stretches are compositionally biased toward basic and acidic residues: residues 377–389 (KHSE…DKVR), 465–484 (NVKR…KKDD), and 508–525 (TSKK…KAER). 2 disordered regions span residues 377–398 (KHSE…SGNN) and 417–525 (PIVR…KAER).

In terms of tissue distribution, basal levels in mitotically dividing cells (meristems), and high levels in endoreduplicating cells (stipules, trichomes) (at protein level).

The protein resides in the nucleus. Its function is as follows. Seems to mediate cell cycle arrest before mitosis in response to DNA damage. Is probably also involved in the transition from mitosis to endoreduplication. This is Protein gamma response 1 (GR1) from Arabidopsis thaliana (Mouse-ear cress).